The following is a 154-amino-acid chain: Small ribosomal subunit protein bS18 (154 aa).

The tract at residues 1–82 (MEKKTTKKAT…PFAKYNRGYP (82 aa)) is disordered. Low complexity predominate over residues 8-19 (KATASKTTTTKK). Residues 20–32 (AAAEKTEIKETKK) are compositionally biased toward basic and acidic residues. A compositionally biased stretch (low complexity) spans 33-49 (TTTTKTSTAKKATTASV). The span at 50–69 (EKTEVKETKKSSDNKKEFNP) shows a compositional bias: basic and acidic residues.

It belongs to the bacterial ribosomal protein bS18 family. As to quaternary structure, part of the 30S ribosomal subunit. Forms a tight heterodimer with protein bS6.

Its function is as follows. Binds as a heterodimer with protein bS6 to the central domain of the 16S rRNA, where it helps stabilize the platform of the 30S subunit. The sequence is that of Small ribosomal subunit protein bS18 from Malacoplasma penetrans (strain HF-2) (Mycoplasma penetrans).